Here is a 457-residue protein sequence, read N- to C-terminus: Bifunctional protein GlmU (457 aa).

The interval 1–229 is pyrophosphorylase; that stretch reads MDLAAVILAA…PVEVTGINDR (229 aa). UDP-N-acetyl-alpha-D-glucosamine is bound by residues 8–11, Lys-22, Gln-72, and 77–78; these read LAAG and GT. Asp-102 contacts Mg(2+). UDP-N-acetyl-alpha-D-glucosamine contacts are provided by Gly-139, Glu-154, Asn-169, and Asn-227. Residue Asn-227 coordinates Mg(2+). Residues 230 to 250 are linker; that stretch reads RQLAEVEKYLRRRVLEDLMQS. The interval 251–457 is N-acetyltransferase; the sequence is GVTVLDPAST…WAAKKRDKKV (207 aa). Positions 332 and 350 each coordinate UDP-N-acetyl-alpha-D-glucosamine. His-362 acts as the Proton acceptor in catalysis. Positions 365 and 376 each coordinate UDP-N-acetyl-alpha-D-glucosamine. Acetyl-CoA is bound by residues 385–386, Ser-404, Ala-422, and Arg-439; that span reads NY.

It in the N-terminal section; belongs to the N-acetylglucosamine-1-phosphate uridyltransferase family. The protein in the C-terminal section; belongs to the transferase hexapeptide repeat family. Homotrimer. Mg(2+) serves as cofactor.

The protein resides in the cytoplasm. The catalysed reaction is alpha-D-glucosamine 1-phosphate + acetyl-CoA = N-acetyl-alpha-D-glucosamine 1-phosphate + CoA + H(+). It catalyses the reaction N-acetyl-alpha-D-glucosamine 1-phosphate + UTP + H(+) = UDP-N-acetyl-alpha-D-glucosamine + diphosphate. It functions in the pathway nucleotide-sugar biosynthesis; UDP-N-acetyl-alpha-D-glucosamine biosynthesis; N-acetyl-alpha-D-glucosamine 1-phosphate from alpha-D-glucosamine 6-phosphate (route II): step 2/2. The protein operates within nucleotide-sugar biosynthesis; UDP-N-acetyl-alpha-D-glucosamine biosynthesis; UDP-N-acetyl-alpha-D-glucosamine from N-acetyl-alpha-D-glucosamine 1-phosphate: step 1/1. It participates in bacterial outer membrane biogenesis; LPS lipid A biosynthesis. Functionally, catalyzes the last two sequential reactions in the de novo biosynthetic pathway for UDP-N-acetylglucosamine (UDP-GlcNAc). The C-terminal domain catalyzes the transfer of acetyl group from acetyl coenzyme A to glucosamine-1-phosphate (GlcN-1-P) to produce N-acetylglucosamine-1-phosphate (GlcNAc-1-P), which is converted into UDP-GlcNAc by the transfer of uridine 5-monophosphate (from uridine 5-triphosphate), a reaction catalyzed by the N-terminal domain. The sequence is that of Bifunctional protein GlmU from Pelotomaculum thermopropionicum (strain DSM 13744 / JCM 10971 / SI).